The chain runs to 293 residues: tRNA pseudouridine synthase A (293 aa).

The active-site Nucleophile is the Asp-60. Substrate is bound at residue Tyr-118.

This sequence belongs to the tRNA pseudouridine synthase TruA family. In terms of assembly, homodimer.

The catalysed reaction is uridine(38/39/40) in tRNA = pseudouridine(38/39/40) in tRNA. Its function is as follows. Formation of pseudouridine at positions 38, 39 and 40 in the anticodon stem and loop of transfer RNAs. The polypeptide is tRNA pseudouridine synthase A (Rippkaea orientalis (strain PCC 8801 / RF-1) (Cyanothece sp. (strain PCC 8801))).